The chain runs to 223 residues: Cytochrome c biogenesis ATP-binding export protein CcmA (223 aa).

The ABC transporter domain occupies 20 to 222 (LAAHALTYSR…PTRLLHLKKA (203 aa)). Residue 52–59 (GPNGIGKT) coordinates ATP.

It belongs to the ABC transporter superfamily. CcmA exporter (TC 3.A.1.107) family. As to quaternary structure, the complex is composed of two ATP-binding proteins (CcmA) and two transmembrane proteins (CcmB).

Its subcellular location is the cell inner membrane. It catalyses the reaction heme b(in) + ATP + H2O = heme b(out) + ADP + phosphate + H(+). Part of the ABC transporter complex CcmAB involved in the biogenesis of c-type cytochromes; once thought to export heme, this seems not to be the case, but its exact role is uncertain. Responsible for energy coupling to the transport system. The chain is Cytochrome c biogenesis ATP-binding export protein CcmA from Xylella fastidiosa (strain 9a5c).